The chain runs to 1076 residues: Structural maintenance of chromosomes protein 5 (1076 aa).

49–56 serves as a coordination point for ATP; the sequence is GHNGSGKS. Residues 190–415 are a coiled coil; sequence STSIEDKCTT…KRDEEQNSQL (226 aa). Residues 375–410 are compositionally biased toward basic and acidic residues; sequence EQKYSTAERDSRQEEDAIQKKSYEMRQLENKKRDEE. The tract at residues 375-420 is disordered; it reads EQKYSTAERDSRQEEDAIQKKSYEMRQLENKKRDEEQNSQLNRQDR. The flexible hinge stretch occupies residues 416 to 617; it reads NRQDRYRVLQ…ANTWRDQFFK (202 aa). 2 coiled-coil regions span residues 627–713 and 749–786; these read NSIL…EKKA and KSRVNKSNSEAETHRSKLEDLKSVKDAAEDLLKTALNH.

It belongs to the SMC family. SMC5 subfamily. Interacts with smc-6. As to expression, expressed in the germline (at protein level).

Its subcellular location is the nucleus. It is found in the chromosome. In terms of biological role, core component of the smc-5/smc-6 complex. Functions in DNA double strand break repair by promoting sister-chromatid homologous recombination during meiosis. Acts in a DNA repair pathway for removal of ionizing radiation- and ultraviolet (UV) radiation-induced DNA lesions that is distinct from classical nucleotide excision repair and the translesion synthesis pathway. Also involved in the recovery of stalled replication forks. This chain is Structural maintenance of chromosomes protein 5, found in Caenorhabditis elegans.